We begin with the raw amino-acid sequence, 410 residues long: MKLLKSSLLLLLPFVTANPIPSEDKDIIPGRYIVTLKDGITQEDIEYHKSWVASVHRSNLAAATAAGRPRLETEGIRKFFQIHKMNAYSGAFDDQTAEDIRRNPYVKSVTPDRKVYLADTVVQENAGYNLGHMSSKGRHSFTYRYDSTAGEGIWAYVLDTGINVDHIEFEGRADSGYNAIKNVSNTDNFGHGSFTAGIIAAKTYGVAKKATVISAKAFDTGSSTYDYIFDAYNWVVKNITDSGRQKKSVVNMSISSAKYQPFDDAVDNAFEAGITTVVAAGNDQRDASNNTPASAANAITVASIRFDNGRSLFSNYGSVVDIFAPGERIVSCWIGGNNATRKADGTSVSSPHVAGLVAYLMAIEDLPDPAAVTKRVLDLSIPDLVRDPGEGSPNRIAYNGIQEMNETVIA.

Positions 1 to 17 are cleaved as a signal peptide; the sequence is MKLLKSSLLLLLPFVTA. The propeptide occupies 18 to 118; it reads NPIPSEDKDI…VTPDRKVYLA (101 aa). In terms of domain architecture, Inhibitor I9 spans 31–118; it reads RYIVTLKDGI…VTPDRKVYLA (88 aa). The Peptidase S8 domain maps to 127 to 410; the sequence is GYNLGHMSSK…IQEMNETVIA (284 aa). Catalysis depends on aspartate 159, which acts as the Charge relay system. The N-linked (GlcNAc...) asparagine glycan is linked to asparagine 182. The Charge relay system role is filled by histidine 191. N-linked (GlcNAc...) asparagine glycans are attached at residues asparagine 238, asparagine 251, and asparagine 338. The active-site Charge relay system is serine 347. Asparagine 405 carries N-linked (GlcNAc...) asparagine glycosylation.

It belongs to the peptidase S8 family.

It is found in the secreted. In terms of biological role, secreted subtilisin-like serine protease with keratinolytic activity that contributes to pathogenicity. The protein is Subtilisin-like protease CPC735_003880 of Coccidioides posadasii (strain C735) (Valley fever fungus).